Reading from the N-terminus, the 109-residue chain is Cytochrome c6 (109 aa).

Positions Met-1–Ser-25 are cleaved as a signal peptide. Heme c is bound by residues Cys-39, Cys-42, His-43, and Met-83.

This sequence belongs to the cytochrome c family. PetJ subfamily. Monomer. Post-translationally, binds 1 heme c group covalently per subunit.

It is found in the plastid. The protein resides in the chloroplast thylakoid lumen. Its function is as follows. Functions as an electron carrier between membrane-bound cytochrome b6-f and photosystem I in oxygenic photosynthesis. The chain is Cytochrome c6 (petJ) from Cyanidium caldarium (Red alga).